The primary structure comprises 86 residues: RNA-binding protein Hfq (86 aa).

Residues 9–68 (DPYLNTLRKERVPVSIYLVNGIKLQGQIESFDQFVILLKNTVSQMVYKHAISTVVPSRPV) form the Sm domain. The tract at residues 66-86 (RPVRLPSAGDSEQADAEPGNA) is disordered.

The protein belongs to the Hfq family. As to quaternary structure, homohexamer.

Functionally, RNA chaperone that binds small regulatory RNA (sRNAs) and mRNAs to facilitate mRNA translational regulation in response to envelope stress, environmental stress and changes in metabolite concentrations. Also binds with high specificity to tRNAs. The chain is RNA-binding protein Hfq from Ectopseudomonas mendocina (strain ymp) (Pseudomonas mendocina).